The primary structure comprises 349 residues: Phosphate acyltransferase (349 aa).

This sequence belongs to the PlsX family. In terms of assembly, homodimer. Probably interacts with PlsY.

Its subcellular location is the cytoplasm. The catalysed reaction is a fatty acyl-[ACP] + phosphate = an acyl phosphate + holo-[ACP]. It functions in the pathway lipid metabolism; phospholipid metabolism. Its function is as follows. Catalyzes the reversible formation of acyl-phosphate (acyl-PO(4)) from acyl-[acyl-carrier-protein] (acyl-ACP). This enzyme utilizes acyl-ACP as fatty acyl donor, but not acyl-CoA. The polypeptide is Phosphate acyltransferase (Rhodospirillum rubrum (strain ATCC 11170 / ATH 1.1.1 / DSM 467 / LMG 4362 / NCIMB 8255 / S1)).